Here is a 1076-residue protein sequence, read N- to C-terminus: Protein EXPORTIN 1B (1076 aa).

One can recognise an Importin N-terminal domain in the interval Ala37–Gln103. HEAT repeat units lie at residues Ala135 to Asp171, Ile232 to Gly267, Met282 to Ser319, Asp475 to Val514, Lys564 to Arg601, Pro613 to Asp650, Leu683 to Asp720, Arg757 to Arg794, Ala799 to Glu836, Glu895 to Asp935, and Lys943 to Lys988.

It belongs to the exportin family. Present in mature pollen grains, unpollinated pistils, and 2-week-old seedlings.

It is found in the nucleus. Its subcellular location is the nuclear pore complex. The protein localises to the nucleus membrane. Receptor for the leucine-rich nuclear export signal (NES). Binds cooperatively to the NES on its target protein and to the small GTPase Ran in its active GTP-bound form. Required for the maternal-to-embryonic transition and during gametophyte development. This is Protein EXPORTIN 1B from Arabidopsis thaliana (Mouse-ear cress).